Here is an 822-residue protein sequence, read N- to C-terminus: Endonuclease MutS2 (822 aa).

348–355 (GPNTGGKT) contributes to the ATP binding site. The interval 707-737 (SLNGKKVEPPPKSEPVPKKVKAEPPATEAKS) is disordered. Residues 709–728 (NGKKVEPPPKSEPVPKKVKA) are compositionally biased toward basic and acidic residues. The region spanning 749–822 (LDCRGDRLER…GAGVTIAYLR (74 aa)) is the Smr domain.

Belongs to the DNA mismatch repair MutS family. MutS2 subfamily. In terms of assembly, homodimer. Binds to stalled ribosomes, contacting rRNA.

Functionally, endonuclease that is involved in the suppression of homologous recombination and thus may have a key role in the control of bacterial genetic diversity. In terms of biological role, acts as a ribosome collision sensor, splitting the ribosome into its 2 subunits. Detects stalled/collided 70S ribosomes which it binds and splits by an ATP-hydrolysis driven conformational change. Acts upstream of the ribosome quality control system (RQC), a ribosome-associated complex that mediates the extraction of incompletely synthesized nascent chains from stalled ribosomes and their subsequent degradation. Probably generates substrates for RQC. The protein is Endonuclease MutS2 of Synechocystis sp. (strain ATCC 27184 / PCC 6803 / Kazusa).